We begin with the raw amino-acid sequence, 227 residues long: Cytochrome c oxidase subunit 2 (227 aa).

Residues 1 to 14 lie on the Mitochondrial intermembrane side of the membrane; the sequence is MAYPFQLGFQDATS. A helical transmembrane segment spans residues 15–45; that stretch reads PIMEELLHFHDHTLMIVFLISSLVLYIISSM. Topologically, residues 46–59 are mitochondrial matrix; it reads LTTKLTHTSTMDAQ. The helical transmembrane segment at 60 to 87 threads the bilayer; the sequence is EVETIWTILPAIILILIALPSLRILYMM. Over 88 to 227 the chain is Mitochondrial intermembrane; it reads DEINNPSLTV…HFEEWSASML (140 aa). Residues H161, C196, E198, C200, H204, and M207 each contribute to the Cu cation site. E198 contacts Mg(2+).

It belongs to the cytochrome c oxidase subunit 2 family. As to quaternary structure, component of the cytochrome c oxidase (complex IV, CIV), a multisubunit enzyme composed of 14 subunits. The complex is composed of a catalytic core of 3 subunits MT-CO1, MT-CO2 and MT-CO3, encoded in the mitochondrial DNA, and 11 supernumerary subunits COX4I, COX5A, COX5B, COX6A, COX6B, COX6C, COX7A, COX7B, COX7C, COX8 and NDUFA4, which are encoded in the nuclear genome. The complex exists as a monomer or a dimer and forms supercomplexes (SCs) in the inner mitochondrial membrane with NADH-ubiquinone oxidoreductase (complex I, CI) and ubiquinol-cytochrome c oxidoreductase (cytochrome b-c1 complex, complex III, CIII), resulting in different assemblies (supercomplex SCI(1)III(2)IV(1) and megacomplex MCI(2)III(2)IV(2)). Found in a complex with TMEM177, COA6, COX18, COX20, SCO1 and SCO2. Interacts with TMEM177 in a COX20-dependent manner. Interacts with COX20. Interacts with COX16. It depends on Cu cation as a cofactor.

It is found in the mitochondrion inner membrane. It catalyses the reaction 4 Fe(II)-[cytochrome c] + O2 + 8 H(+)(in) = 4 Fe(III)-[cytochrome c] + 2 H2O + 4 H(+)(out). Its function is as follows. Component of the cytochrome c oxidase, the last enzyme in the mitochondrial electron transport chain which drives oxidative phosphorylation. The respiratory chain contains 3 multisubunit complexes succinate dehydrogenase (complex II, CII), ubiquinol-cytochrome c oxidoreductase (cytochrome b-c1 complex, complex III, CIII) and cytochrome c oxidase (complex IV, CIV), that cooperate to transfer electrons derived from NADH and succinate to molecular oxygen, creating an electrochemical gradient over the inner membrane that drives transmembrane transport and the ATP synthase. Cytochrome c oxidase is the component of the respiratory chain that catalyzes the reduction of oxygen to water. Electrons originating from reduced cytochrome c in the intermembrane space (IMS) are transferred via the dinuclear copper A center (CU(A)) of subunit 2 and heme A of subunit 1 to the active site in subunit 1, a binuclear center (BNC) formed by heme A3 and copper B (CU(B)). The BNC reduces molecular oxygen to 2 water molecules using 4 electrons from cytochrome c in the IMS and 4 protons from the mitochondrial matrix. The sequence is that of Cytochrome c oxidase subunit 2 (MT-CO2) from Equus caballus (Horse).